The chain runs to 735 residues: Photosystem I P700 chlorophyll a apoprotein A2 (735 aa).

8 helical membrane passes run 46 to 69 (LFST…FHIA), 135 to 158 (LYQG…LHLQ), 175 to 199 (LNHH…HVAI), 273 to 291 (IAHH…GHMY), 333 to 356 (LHFQ…QHMY), 372 to 398 (AALY…IFFI), 420 to 442 (AIIS…LYVH), and 518 to 536 (FLVH…LILV). Residues Cys-560 and Cys-569 each coordinate [4Fe-4S] cluster. Transmembrane regions (helical) follow at residues 576–597 (AFYL…YWHW) and 644–666 (LAVW…MFLI). The chlorophyll a site is built by His-655, Met-663, and Tyr-671. Trp-672 lines the phylloquinone pocket. A helical transmembrane segment spans residues 708 to 728 (VVGLAHFSVGYVLTYAAFLIA).

The protein belongs to the PsaA/PsaB family. The PsaA/B heterodimer binds the P700 chlorophyll special pair and subsequent electron acceptors. PSI consists of a core antenna complex that captures photons, and an electron transfer chain that converts photonic excitation into a charge separation. The cyanobacterial PSI reaction center is composed of one copy each of PsaA,B,C,D,E,F,I,J,K,L,M and X, and forms trimeric complexes. It depends on PSI electron transfer chain: 5 chlorophyll a, 1 chlorophyll a', 2 phylloquinones and 3 4Fe-4S clusters. PSI core antenna: 90 chlorophyll a, 22 carotenoids, 3 phospholipids and 1 galactolipid. P700 is a chlorophyll a/chlorophyll a' dimer, A0 is one or more chlorophyll a, A1 is one or both phylloquinones and FX is a shared 4Fe-4S iron-sulfur center. as a cofactor.

The protein resides in the cellular thylakoid membrane. The catalysed reaction is reduced [plastocyanin] + hnu + oxidized [2Fe-2S]-[ferredoxin] = oxidized [plastocyanin] + reduced [2Fe-2S]-[ferredoxin]. PsaA and PsaB bind P700, the primary electron donor of photosystem I (PSI), as well as the electron acceptors A0, A1 and FX. PSI is a plastocyanin/cytochrome c6-ferredoxin oxidoreductase, converting photonic excitation into a charge separation, which transfers an electron from the donor P700 chlorophyll pair to the spectroscopically characterized acceptors A0, A1, FX, FA and FB in turn. Oxidized P700 is reduced on the lumenal side of the thylakoid membrane by plastocyanin or cytochrome c6. The polypeptide is Photosystem I P700 chlorophyll a apoprotein A2 (Synechococcus sp. (strain CC9902)).